The sequence spans 513 residues: Histidine ammonia-lyase (513 aa).

The segment at residues 144–146 (ASG) is a cross-link (5-imidazolinone (Ala-Gly)). Ser-145 carries the post-translational modification 2,3-didehydroalanine (Ser).

The protein belongs to the PAL/histidase family. Contains an active site 4-methylidene-imidazol-5-one (MIO), which is formed autocatalytically by cyclization and dehydration of residues Ala-Ser-Gly.

Its subcellular location is the cytoplasm. The enzyme catalyses L-histidine = trans-urocanate + NH4(+). Its pathway is amino-acid degradation; L-histidine degradation into L-glutamate; N-formimidoyl-L-glutamate from L-histidine: step 1/3. The sequence is that of Histidine ammonia-lyase from Streptococcus pyogenes serotype M49 (strain NZ131).